Here is a 295-residue protein sequence, read N- to C-terminus: Putative NADH-ubiquinone oxidoreductase MJ0520 (295 aa).

Helical transmembrane passes span 8-28 (LIGAINLTIHAFLVGSLLLGL), 69-89 (LYIFVALLDIAIWLAALIIAI), 129-149 (VFSAAAEVPLFAVVAAIYLTT), 163-183 (IHGSLLFKMPICAFAFFILLV), 199-219 (IVSGYMTEHYGLLGAIIYIAE), 220-240 (AIAYFVLLWLFIAVFIGPLVI), 243-263 (PVLTLAVMVVMTVILAFVNGL), and 273-293 (VMLQMTIAGLVLCDVLYRLIV).

This sequence belongs to the complex I subunit 1 family.

It localises to the cell membrane. The enzyme catalyses a ubiquinone + NADH + 5 H(+)(in) = a ubiquinol + NAD(+) + 4 H(+)(out). The polypeptide is Putative NADH-ubiquinone oxidoreductase MJ0520 (Methanocaldococcus jannaschii (strain ATCC 43067 / DSM 2661 / JAL-1 / JCM 10045 / NBRC 100440) (Methanococcus jannaschii)).